Consider the following 487-residue polypeptide: b(0,+)-type amino acid transporter 1 (487 aa).

Residues 1–20 (MEETSLRRRREDEKSTHSTE) form a disordered region. Topologically, residues 1–31 (MEETSLRRRREDEKSTHSTELKTTSLQKEVG) are cytoplasmic. Residue Ser18 is modified to Phosphoserine. A helical membrane pass occupies residues 32 to 55 (LLSGICIIVGTIIGSGIFISPKSV). Residue 43–47 (IIGSG) participates in L-arginine binding. Residues 56–62 (LANTESV) are Extracellular-facing. A helical membrane pass occupies residues 63–84 (GPCLIIWAACGILATLGALCFA). Over 85 to 110 (ELGTMITKSGGEYPYLMEAFGPIPAY) the chain is Cytoplasmic. The chain crosses the membrane as a helical span at residues 111–137 (LFSWTSLIVMKPSSFAIICLSFSEYVC). At 138-147 (AAFYSGCKPP) the chain is on the extracellular side. 2 helical membrane-spanning segments follow: residues 148 to 169 (AVVV…NALS) and 170 to 193 (VRLG…IIII). At 194 to 217 (SGLVFLAQGNVKNFQNSFEGTQTS) the chain is on the extracellular side. A helical transmembrane segment spans residues 218–238 (VGAISLAFYNGLWAYDGWNQL). Position 233 (Asp233) interacts with L-arginine. The Cytoplasmic segment spans residues 239 to 251 (NYITEELRNPYRN). Residues 252–274 (LPMAIVIGIPLVTVCYILMNIAY) form a helical membrane-spanning segment. The Extracellular portion of the chain corresponds to 275-302 (FTVMTPTELLQSQAVAVTFGDRVLYPAS). The chain crosses the membrane as a helical span at residues 303–325 (WVVPLFVAFSTIGAANGTCFTAG). Over 326-351 (RLIYVAGREGHMLKVLSYISVKRLTP) the chain is Cytoplasmic. The next 2 membrane-spanning stretches (helical) occupy residues 352–370 (APAL…IPGD) and 371–391 (INSL…MTIL). Residues 392 to 410 (GLVVMRFTRKDLERPIKVP) are Cytoplasmic-facing. The helical transmembrane segment at 411-431 (LFIPIIVILVSLFLILAPIIS) threads the bilayer. Topologically, residues 432–434 (EPA) are extracellular. Residues 435 to 450 (WEYLYCVLFILSGLIF) traverse the membrane as a helical segment. Residues 451–487 (YFLFVYYKFGWAQRISRPVTKHLQMLMEVVPPEKDPE) are Cytoplasmic-facing.

This sequence belongs to the amino acid-polyamine-organocation (APC) superfamily. Disulfide-linked heterodimer composed of the catalytic light chain subunit SLC7A9 and the heavy chain subunit SLC3A1. The heterodimer is the minimal functional unit. Assembles in heterotetramers (dimers of heterodimers) and higher order oligomers; the oligomerization is mediated by SLC3A1 likely to prevent degradation and facilitate heteromer trafficking to the plasma membrane. Interacts with CAV1. Expressed in the brush border membrane in the kidney (at protein level).

The protein localises to the apical cell membrane. It catalyses the reaction L-leucine(out) + L-arginine(in) = L-leucine(in) + L-arginine(out). The enzyme catalyses L-histidine(out) + L-arginine(in) = L-histidine(in) + L-arginine(out). The catalysed reaction is L-arginine(in) + L-phenylalanine(out) = L-arginine(out) + L-phenylalanine(in). It carries out the reaction L-cysteine(out) + L-arginine(in) = L-cysteine(in) + L-arginine(out). It catalyses the reaction L-cystine(out) + L-arginine(in) = L-cystine(in) + L-arginine(out). The enzyme catalyses L-lysine(out) + L-arginine(in) = L-lysine(in) + L-arginine(out). Associates with SLC3A1 to form a functional transporter complex that mediates the electrogenic exchange between cationic amino acids and neutral amino acids, with a stoichiometry of 1:1. Has system b(0,+)-like activity with high affinity for extracellular cationic amino acids and L-cystine and lower affinity for intracellular neutral amino acids. Substrate exchange is driven by high concentration of intracellular neutral amino acids and the intracellular reduction of L-cystine to L-cysteine. Required for reabsorption of L-cystine and dibasic amino acids across the brush border membrane in renal proximal tubules. The protein is b(0,+)-type amino acid transporter 1 (Slc7a9) of Mus musculus (Mouse).